The sequence spans 412 residues: uncharacterized protein (412 aa).

The next 11 helical transmembrane spans lie at Leu17–Ile37, Val54–Val74, Met91–Leu111, Gly112–Gly132, Leu146–Gly166, Trp173–Met193, Val225–Gly245, Thr257–Gly277, Leu299–Ile319, Val346–Gly366, and Ala375–Ala395.

This sequence belongs to the major facilitator superfamily.

The protein resides in the cell membrane. This is an uncharacterized protein from Bacillus subtilis (strain 168).